A 150-amino-acid chain; its full sequence is Phosphoribosyl-AMP cyclohydrolase (150 aa).

Asp-93 provides a ligand contact to Mg(2+). Cys-94 lines the Zn(2+) pocket. Residues Asp-95 and Asp-97 each contribute to the Mg(2+) site. The Zn(2+) site is built by Cys-112 and Cys-119.

Belongs to the PRA-CH family. In terms of assembly, homodimer. The cofactor is Mg(2+). It depends on Zn(2+) as a cofactor.

The protein localises to the cytoplasm. The enzyme catalyses 1-(5-phospho-beta-D-ribosyl)-5'-AMP + H2O = 1-(5-phospho-beta-D-ribosyl)-5-[(5-phospho-beta-D-ribosylamino)methylideneamino]imidazole-4-carboxamide. It participates in amino-acid biosynthesis; L-histidine biosynthesis; L-histidine from 5-phospho-alpha-D-ribose 1-diphosphate: step 3/9. Its function is as follows. Catalyzes the hydrolysis of the adenine ring of phosphoribosyl-AMP. The polypeptide is Phosphoribosyl-AMP cyclohydrolase (Rhizobium etli (strain ATCC 51251 / DSM 11541 / JCM 21823 / NBRC 15573 / CFN 42)).